Here is a 298-residue protein sequence, read N- to C-terminus: MTKQTEYKRKPEWLKIKLNTNENYTGLKKMMRSKNLHTVCEEAKCPNIHECWAVRKTATFMILGAVCTRACRFCAVKTGLPTELDLQEPERVADSVVQMGLKHVVITAVARDDLKDGGAAVFAETVRAVRRKNPFTSIEVLPSDMGGVEENLKMLMDAKPDILNHNIETVRRLSNRVRARAKYDRSLEFLRRAKEMQPDIPTKSSIMVGLGETREDLIEAMDDLRANNVDILTLGQYLQPSKKHLPVLKYYPPAEFAELKEIALSKGFSHCEAGPLVRSSYHADEQVRSAKEKTAEAK.

[4Fe-4S] cluster-binding residues include Cys-40, Cys-45, Cys-51, Cys-67, Cys-71, Cys-74, and Ser-280. Residues 53 to 269 (AVRKTATFMI…KEIALSKGFS (217 aa)) enclose the Radical SAM core domain.

This sequence belongs to the radical SAM superfamily. Lipoyl synthase family. [4Fe-4S] cluster is required as a cofactor.

The protein localises to the cytoplasm. It catalyses the reaction [[Fe-S] cluster scaffold protein carrying a second [4Fe-4S](2+) cluster] + N(6)-octanoyl-L-lysyl-[protein] + 2 oxidized [2Fe-2S]-[ferredoxin] + 2 S-adenosyl-L-methionine + 4 H(+) = [[Fe-S] cluster scaffold protein] + N(6)-[(R)-dihydrolipoyl]-L-lysyl-[protein] + 4 Fe(3+) + 2 hydrogen sulfide + 2 5'-deoxyadenosine + 2 L-methionine + 2 reduced [2Fe-2S]-[ferredoxin]. Its pathway is protein modification; protein lipoylation via endogenous pathway; protein N(6)-(lipoyl)lysine from octanoyl-[acyl-carrier-protein]. Functionally, catalyzes the radical-mediated insertion of two sulfur atoms into the C-6 and C-8 positions of the octanoyl moiety bound to the lipoyl domains of lipoate-dependent enzymes, thereby converting the octanoylated domains into lipoylated derivatives. This chain is Lipoyl synthase, found in Bacillus anthracis (strain A0248).